We begin with the raw amino-acid sequence, 616 residues long: Dihydroxy-acid dehydratase (616 aa).

Residue Asp-81 coordinates Mg(2+). [2Fe-2S] cluster is bound at residue Cys-122. Asp-123 and Lys-124 together coordinate Mg(2+). At Lys-124 the chain carries N6-carboxylysine. Cys-195 serves as a coordination point for [2Fe-2S] cluster. Glu-491 contacts Mg(2+). The active-site Proton acceptor is the Ser-517.

It belongs to the IlvD/Edd family. Homodimer. It depends on [2Fe-2S] cluster as a cofactor. Mg(2+) serves as cofactor.

It catalyses the reaction (2R)-2,3-dihydroxy-3-methylbutanoate = 3-methyl-2-oxobutanoate + H2O. The catalysed reaction is (2R,3R)-2,3-dihydroxy-3-methylpentanoate = (S)-3-methyl-2-oxopentanoate + H2O. The protein operates within amino-acid biosynthesis; L-isoleucine biosynthesis; L-isoleucine from 2-oxobutanoate: step 3/4. It participates in amino-acid biosynthesis; L-valine biosynthesis; L-valine from pyruvate: step 3/4. In terms of biological role, functions in the biosynthesis of branched-chain amino acids. Catalyzes the dehydration of (2R,3R)-2,3-dihydroxy-3-methylpentanoate (2,3-dihydroxy-3-methylvalerate) into 2-oxo-3-methylpentanoate (2-oxo-3-methylvalerate) and of (2R)-2,3-dihydroxy-3-methylbutanoate (2,3-dihydroxyisovalerate) into 2-oxo-3-methylbutanoate (2-oxoisovalerate), the penultimate precursor to L-isoleucine and L-valine, respectively. The protein is Dihydroxy-acid dehydratase of Salmonella schwarzengrund (strain CVM19633).